The following is a 210-amino-acid chain: UPF0301 protein M446_6268 (210 aa).

The protein belongs to the UPF0301 (AlgH) family.

The protein is UPF0301 protein M446_6268 of Methylobacterium sp. (strain 4-46).